Here is a 208-residue protein sequence, read N- to C-terminus: Probable hydrolase YcaC (208 aa).

Cys-118 is a catalytic residue.

Homooctamer composed of two tetrameric rings.

This Escherichia coli (strain K12) protein is Probable hydrolase YcaC (ycaC).